Reading from the N-terminus, the 245-residue chain is METVNNSVQSEKSRRRVLLKLSGEVFGGGKLGVDPDTVRGVAKQIAAAVPDVEVAIVVGGGNFFRGAELSQSGMDRSRADYMGMLGTVMNCLALQDFLEQAGVETRVQSAITMGQVAEAYIPRRAIRHMEKGRVVIFGAGAGLPYFSTDTVAAQRALEVHADVVLMAKSGVDGVYTADPKKDPEAEKLDHLSYDEALRRDIRVMDQTAMTMCKDNNLTMVVFGMEGEGNVTRAIRGEQLGTVVTP.

Residue 20 to 23 (KLSG) participates in ATP binding. Gly60 lines the UMP pocket. Residues Gly61 and Arg65 each coordinate ATP. UMP-binding positions include Asp80 and 141-148 (AGLPYFST). Residues Tyr175 and Asp178 each contribute to the ATP site.

Belongs to the UMP kinase family. Homohexamer.

The protein localises to the cytoplasm. It carries out the reaction UMP + ATP = UDP + ADP. Its pathway is pyrimidine metabolism; CTP biosynthesis via de novo pathway; UDP from UMP (UMPK route): step 1/1. Its activity is regulated as follows. Inhibited by UTP. In terms of biological role, catalyzes the reversible phosphorylation of UMP to UDP. The chain is Uridylate kinase from Arthrobacter sp. (strain FB24).